Here is a 509-residue protein sequence, read N- to C-terminus: Monofunctional riboflavin biosynthesis protein RIBA 3, chloroplastic (509 aa).

The transit peptide at 1–43 (MMDSALYHPRIFFAHSFINGLYSSPRFANTCWRLVSRSSWEIK) directs the protein to the chloroplast. The tract at residues 44 to 302 (ASENSDRNVF…LTDLIRYRRK (259 aa)) is inactive DHBP synthase. D-ribulose 5-phosphate contacts are provided by residues 125-126 (GD) and 240-244 (RAGHT). The GTP cyclohydrolase II stretch occupies residues 303–509 (RDKLVERITV…ISDNNDQPLA (207 aa)). Residue 353 to 357 (RVHSE) coordinates GTP. Positions 358, 369, and 371 each coordinate Zn(2+). GTP is bound by residues Gln-374, 397–399 (EGR), and Thr-419. Asp-431 (proton acceptor; for GTP cyclohydrolase activity) is an active-site residue. The active-site Nucleophile; for GTP cyclohydrolase activity is the Arg-433. Positions 454 and 459 each coordinate GTP.

This sequence in the N-terminal section; belongs to the DHBP synthase family. It in the C-terminal section; belongs to the GTP cyclohydrolase II family. Requires Zn(2+) as cofactor. As to expression, expressed in leaves, shoots, roots, flowers and siliques.

Its subcellular location is the plastid. The protein resides in the chloroplast. The catalysed reaction is GTP + 4 H2O = 2,5-diamino-6-hydroxy-4-(5-phosphoribosylamino)-pyrimidine + formate + 2 phosphate + 3 H(+). Its pathway is cofactor biosynthesis; riboflavin biosynthesis; 5-amino-6-(D-ribitylamino)uracil from GTP: step 1/4. Its function is as follows. Involved in riboflavin biosynthesis. Catalyzes the conversion of GTP to 2,5-diamino-6-ribosylamino-4(3H)-pyrimidinone 5'-phosphate (DARP), formate and pyrophosphate. RIBA2 and RIBA3 together are not able to complement the loss of function of RIBA1. The protein is Monofunctional riboflavin biosynthesis protein RIBA 3, chloroplastic (RIBA3) of Arabidopsis thaliana (Mouse-ear cress).